Reading from the N-terminus, the 241-residue chain is Trypsin-1 (241 aa).

An N-terminal signal peptide occupies residues 1–13 (MKSLIFVLLLGAV). A propeptide spans 14–19 (FAEEDK) (activation peptide). In terms of domain architecture, Peptidase S1 spans 20 to 239 (IVGGYECTKH…LSGWVRDTMA (220 aa)). 6 cysteine pairs are disulfide-bonded: Cys-26/Cys-155, Cys-44/Cys-60, Cys-128/Cys-228, Cys-135/Cys-201, Cys-166/Cys-180, and Cys-191/Cys-215. Active-site charge relay system residues include His-59 and Asp-103. Ser-195 (charge relay system) is an active-site residue.

This sequence belongs to the peptidase S1 family.

The protein localises to the secreted. It localises to the extracellular space. It catalyses the reaction Preferential cleavage: Arg-|-Xaa, Lys-|-Xaa.. The sequence is that of Trypsin-1 from Gadus morhua (Atlantic cod).